Here is a 308-residue protein sequence, read N- to C-terminus: Aspartate carbamoyltransferase catalytic subunit (308 aa).

Carbamoyl phosphate contacts are provided by R57 and T58. K86 lines the L-aspartate pocket. The carbamoyl phosphate site is built by R107, H135, and Q138. Residues R168 and R228 each contribute to the L-aspartate site. Carbamoyl phosphate contacts are provided by L267 and P268.

This sequence belongs to the aspartate/ornithine carbamoyltransferase superfamily. ATCase family. In terms of assembly, heterododecamer (2C3:3R2) of six catalytic PyrB chains organized as two trimers (C3), and six regulatory PyrI chains organized as three dimers (R2).

The enzyme catalyses carbamoyl phosphate + L-aspartate = N-carbamoyl-L-aspartate + phosphate + H(+). It participates in pyrimidine metabolism; UMP biosynthesis via de novo pathway; (S)-dihydroorotate from bicarbonate: step 2/3. Its function is as follows. Catalyzes the condensation of carbamoyl phosphate and aspartate to form carbamoyl aspartate and inorganic phosphate, the committed step in the de novo pyrimidine nucleotide biosynthesis pathway. This chain is Aspartate carbamoyltransferase catalytic subunit, found in Leptospira interrogans serogroup Icterohaemorrhagiae serovar Lai (strain 56601).